We begin with the raw amino-acid sequence, 564 residues long: Forkhead transcription factor HCM1 (564 aa).

Positions 33–80 are disordered; the sequence is DEKEMITPPSSTVRKTMKEVNKRPSHPLSPDHSSPIAPSKAKRQRSDT. Low complexity predominate over residues 58-67; that stretch reads HPLSPDHSSP. The fork-head DNA-binding region spans 108-199; the sequence is KKPPYSYATL…KFFKGENRGY (92 aa). A compositionally biased stretch (acidic residues) spans 224–241; that stretch reads QVESGEGNDDLPDEEERE. The tract at residues 224–246 is disordered; sequence QVESGEGNDDLPDEEEREEAGKF. Residue threonine 342 is modified to Phosphothreonine. The tract at residues 401–448 is disordered; that stretch reads SKPQSQQSYSNSQLPPPPSSHGSDLLKTPKMRHSDGLEKTPSRLISTP. Residues 402 to 413 are compositionally biased toward polar residues; it reads KPQSQQSYSNSQ. The span at 432 to 441 shows a compositional bias: basic and acidic residues; it reads RHSDGLEKTP. Position 496 is a phosphoserine (serine 496). The tract at residues 536 to 564 is disordered; sequence SDGNNTTDSNQKHHPYHNHPSNDSGNEKN. A compositionally biased stretch (polar residues) spans 554-564; that stretch reads HPSNDSGNEKN.

In terms of processing, phosphorylated by CDK1.

It localises to the cytoplasm. Its subcellular location is the nucleus. Functionally, transcription factor regulating the cell cycle specific transcription of a spindle pole body (SPB) calmodulin binding protein SPC110. Required for full induction of SPC110 transcription in late G1. Binds to DNA consensus sequence 5'-[AT]AA[TC]AAACAA[AT]-3'. Dosage dependent suppressor of calmodulin mutants which have specific defects in SPB assembly. The protein is Forkhead transcription factor HCM1 (HCM1) of Saccharomyces cerevisiae (strain ATCC 204508 / S288c) (Baker's yeast).